We begin with the raw amino-acid sequence, 55 residues long: MAADPQCTRCKQTIEPGWLYITAHRRGQAGIVDDGAVLIHVPGECPHPGEHVPRS.

This is an uncharacterized protein from Mycobacterium tuberculosis (strain ATCC 25618 / H37Rv).